We begin with the raw amino-acid sequence, 274 residues long: 3-methyl-2-oxobutanoate hydroxymethyltransferase (274 aa).

Asp-46 and Asp-85 together coordinate Mg(2+). 3-methyl-2-oxobutanoate contacts are provided by residues Asp-46–Ser-47, Asp-85, and Lys-114. Glu-116 contacts Mg(2+). The active-site Proton acceptor is Glu-183.

Belongs to the PanB family. As to quaternary structure, homodecamer; pentamer of dimers. Mg(2+) serves as cofactor.

The protein localises to the cytoplasm. The enzyme catalyses 3-methyl-2-oxobutanoate + (6R)-5,10-methylene-5,6,7,8-tetrahydrofolate + H2O = 2-dehydropantoate + (6S)-5,6,7,8-tetrahydrofolate. The protein operates within cofactor biosynthesis; coenzyme A biosynthesis. Its function is as follows. Catalyzes the reversible reaction in which hydroxymethyl group from 5,10-methylenetetrahydrofolate is transferred onto alpha-ketoisovalerate to form ketopantoate. The sequence is that of 3-methyl-2-oxobutanoate hydroxymethyltransferase from Aeropyrum pernix (strain ATCC 700893 / DSM 11879 / JCM 9820 / NBRC 100138 / K1).